Here is a 310-residue protein sequence, read N- to C-terminus: MSGEFVHASVLAREVVEVLRPAPGKLLLDGTLGGGGHSELLLERGARVIGLDKDPRALAAATARLARWGEAFRAVRADFRDAKNVLSALGLTGVDGTLVDLGVSSPQLDQADRGFSFSRPGPLDMRMGDEGERLEDLLRRIDERELARILREYGEEPFARPIARAVKRAVESDEALDTARLADIVAKAIPRKAWPRRIHPATRTFQALRIAVNDELGALAAWLDGLPATLNVGGRAAAISFHSLEDRMVKERFRALTQACTCPPDLPVCACGARASFAAITRKAVVASEAEVAENPRARSAKLRAVEKIR.

Residues 35 to 37 (GGH), Asp52, Phe79, Asp100, and Gln107 contribute to the S-adenosyl-L-methionine site.

It belongs to the methyltransferase superfamily. RsmH family.

Its subcellular location is the cytoplasm. It carries out the reaction cytidine(1402) in 16S rRNA + S-adenosyl-L-methionine = N(4)-methylcytidine(1402) in 16S rRNA + S-adenosyl-L-homocysteine + H(+). Specifically methylates the N4 position of cytidine in position 1402 (C1402) of 16S rRNA. The sequence is that of Ribosomal RNA small subunit methyltransferase H from Anaeromyxobacter sp. (strain Fw109-5).